The primary structure comprises 121 residues: ATP synthase epsilon chain (121 aa).

This sequence belongs to the ATPase epsilon chain family. F-type ATPases have 2 components, CF(1) - the catalytic core - and CF(0) - the membrane proton channel. CF(1) has five subunits: alpha(3), beta(3), gamma(1), delta(1), epsilon(1). CF(0) has three main subunits: a, b and c.

Its subcellular location is the cell membrane. Produces ATP from ADP in the presence of a proton gradient across the membrane. The polypeptide is ATP synthase epsilon chain (Mycobacterium sp. (strain JLS)).